The chain runs to 428 residues: Chaperone SurA (428 aa).

The signal sequence occupies residues methionine 1 to alanine 20. PpiC domains are found at residues serine 171–aspartate 272 and valine 282–aspartate 382.

It is found in the periplasm. The catalysed reaction is [protein]-peptidylproline (omega=180) = [protein]-peptidylproline (omega=0). Chaperone involved in the correct folding and assembly of outer membrane proteins. Recognizes specific patterns of aromatic residues and the orientation of their side chains, which are found more frequently in integral outer membrane proteins. May act in both early periplasmic and late outer membrane-associated steps of protein maturation. The chain is Chaperone SurA from Shigella dysenteriae serotype 1 (strain Sd197).